Consider the following 87-residue polypeptide: Small ribosomal subunit protein bS16 (87 aa).

The protein belongs to the bacterial ribosomal protein bS16 family.

In Ehrlichia ruminantium (strain Welgevonden), this protein is Small ribosomal subunit protein bS16.